We begin with the raw amino-acid sequence, 147 residues long: Peptide methionine sulfoxide reductase MsrB (147 aa).

In terms of domain architecture, MsrB spans 8–131 (KEELKKILTE…NSASLKFIPK (124 aa)). The Nucleophile role is filled by C120.

This sequence belongs to the MsrB Met sulfoxide reductase family.

The catalysed reaction is L-methionyl-[protein] + [thioredoxin]-disulfide + H2O = L-methionyl-(R)-S-oxide-[protein] + [thioredoxin]-dithiol. In Clostridium perfringens (strain SM101 / Type A), this protein is Peptide methionine sulfoxide reductase MsrB.